We begin with the raw amino-acid sequence, 187 residues long: MISSNDFRTGTTIELDGQVWRVIEFLHVKPGKGSAFVRTKLKNVMTGNVNERTFRAGETLPQAVVEKRDMQFVYPQGDNEYVFMDMESYEQEALTRETLGDGAKYLKEGMSVSILKWQERVIGVDLPNTVVLQVVETDPGVKGDTAQGGTKPAKVETGAEVMVPLFITIGEKIKIDTRDNSYLGREN.

It belongs to the elongation factor P family.

The protein resides in the cytoplasm. Its pathway is protein biosynthesis; polypeptide chain elongation. Functionally, involved in peptide bond synthesis. Stimulates efficient translation and peptide-bond synthesis on native or reconstituted 70S ribosomes in vitro. Probably functions indirectly by altering the affinity of the ribosome for aminoacyl-tRNA, thus increasing their reactivity as acceptors for peptidyl transferase. In Gloeobacter violaceus (strain ATCC 29082 / PCC 7421), this protein is Elongation factor P.